We begin with the raw amino-acid sequence, 235 residues long: Phosphoribosylaminoimidazole-succinocarboxamide synthase (235 aa).

This sequence belongs to the SAICAR synthetase family.

It catalyses the reaction 5-amino-1-(5-phospho-D-ribosyl)imidazole-4-carboxylate + L-aspartate + ATP = (2S)-2-[5-amino-1-(5-phospho-beta-D-ribosyl)imidazole-4-carboxamido]succinate + ADP + phosphate + 2 H(+). The protein operates within purine metabolism; IMP biosynthesis via de novo pathway; 5-amino-1-(5-phospho-D-ribosyl)imidazole-4-carboxamide from 5-amino-1-(5-phospho-D-ribosyl)imidazole-4-carboxylate: step 1/2. This is Phosphoribosylaminoimidazole-succinocarboxamide synthase from Exiguobacterium sibiricum (strain DSM 17290 / CCUG 55495 / CIP 109462 / JCM 13490 / 255-15).